The sequence spans 380 residues: Cytochrome b (380 aa).

A run of 4 helical transmembrane segments spans residues 34 to 54 (FGSLLGICLATQILTGLLLAA), 78 to 99 (WLIRNLHANGASFFFICIYLHI), 114 to 134 (WNTGVILLLTLMATAFVGYVL), and 179 to 199 (FFTLHFLLPFMIMGLTLIHLT). Residues His84 and His98 each coordinate heme b. The heme b site is built by His183 and His197. Residue His202 participates in a ubiquinone binding. 4 helical membrane passes run 227-247 (LKDILGFMLMLLPLMTLALFS), 289-309 (LGGVLALAASVLILFLAPLLH), 321-341 (LSQLLFWTLTANLLILTWVGS), and 348-368 (FMIIGQLASLTYFTILLVLFP).

The protein belongs to the cytochrome b family. As to quaternary structure, the cytochrome bc1 complex contains 11 subunits: 3 respiratory subunits (MT-CYB, CYC1 and UQCRFS1), 2 core proteins (UQCRC1 and UQCRC2) and 6 low-molecular weight proteins (UQCRH/QCR6, UQCRB/QCR7, UQCRQ/QCR8, UQCR10/QCR9, UQCR11/QCR10 and a cleavage product of UQCRFS1). This cytochrome bc1 complex then forms a dimer. Heme b is required as a cofactor.

The protein resides in the mitochondrion inner membrane. Functionally, component of the ubiquinol-cytochrome c reductase complex (complex III or cytochrome b-c1 complex) that is part of the mitochondrial respiratory chain. The b-c1 complex mediates electron transfer from ubiquinol to cytochrome c. Contributes to the generation of a proton gradient across the mitochondrial membrane that is then used for ATP synthesis. This Anthropoides virgo (Demoiselle crane) protein is Cytochrome b (MT-CYB).